Here is a 310-residue protein sequence, read N- to C-terminus: MAVVTMRELLESGVHFGHQTRRWNPKMKRFIFTERNGIYIIDLLQSLSYIDRAYEFVKETVAHGGTVMFVGTKKQAQEAIAEQATRVGMPYVNQRWLGGMLTNFSTVYKRLQRLKELEQIDFEDVAASGLTKKELLVLSREKAKLEKTLGGIREMSKVPSAVWIVDTKKEHIAVGEARKLNIPVVAILDTNCDPDEVDHKIPGNDDAIRSVTLLTRVIADAVAEGLIARSGAAGGAKGDKAAGEPLAAWERDLLEGEKAEKKDDAEAAEKPAEAPAAEAPAAEAAEAPAAEAAPAEEPAAEAPAADAEQA.

Over residues 249 to 272 the composition is skewed to basic and acidic residues; it reads WERDLLEGEKAEKKDDAEAAEKPA. The segment at 249–310 is disordered; the sequence is WERDLLEGEK…EAPAADAEQA (62 aa). Positions 273-310 are enriched in low complexity; the sequence is EAPAAEAPAAEAAEAPAAEAAPAEEPAAEAPAADAEQA.

This sequence belongs to the universal ribosomal protein uS2 family.

The chain is Small ribosomal subunit protein uS2 (rpsB) from Streptomyces coelicolor (strain ATCC BAA-471 / A3(2) / M145).